The primary structure comprises 191 residues: Threonylcarbamoyl-AMP synthase (191 aa).

A YrdC-like domain is found at 10–191; that stretch reads VPKLTQCVRT…DLYTDAIIRA (182 aa).

It belongs to the SUA5 family. TsaC subfamily.

The protein localises to the cytoplasm. The catalysed reaction is L-threonine + hydrogencarbonate + ATP = L-threonylcarbamoyladenylate + diphosphate + H2O. Required for the formation of a threonylcarbamoyl group on adenosine at position 37 (t(6)A37) in tRNAs that read codons beginning with adenine. Catalyzes the conversion of L-threonine, HCO(3)(-)/CO(2) and ATP to give threonylcarbamoyl-AMP (TC-AMP) as the acyladenylate intermediate, with the release of diphosphate. The chain is Threonylcarbamoyl-AMP synthase from Saccharophagus degradans (strain 2-40 / ATCC 43961 / DSM 17024).